The chain runs to 418 residues: UDP-N-acetylglucosamine 1-carboxyvinyltransferase (418 aa).

Residue 22–23 coordinates phosphoenolpyruvate; it reads KN. Arg93 contributes to the UDP-N-acetyl-alpha-D-glucosamine binding site. Cys117 (proton donor) is an active-site residue. At Cys117 the chain carries 2-(S-cysteinyl)pyruvic acid O-phosphothioketal. Residues Asp305 and Val327 each contribute to the UDP-N-acetyl-alpha-D-glucosamine site.

It belongs to the EPSP synthase family. MurA subfamily.

It is found in the cytoplasm. The catalysed reaction is phosphoenolpyruvate + UDP-N-acetyl-alpha-D-glucosamine = UDP-N-acetyl-3-O-(1-carboxyvinyl)-alpha-D-glucosamine + phosphate. The protein operates within cell wall biogenesis; peptidoglycan biosynthesis. Its function is as follows. Cell wall formation. Adds enolpyruvyl to UDP-N-acetylglucosamine. This chain is UDP-N-acetylglucosamine 1-carboxyvinyltransferase, found in Halorhodospira halophila (strain DSM 244 / SL1) (Ectothiorhodospira halophila (strain DSM 244 / SL1)).